We begin with the raw amino-acid sequence, 197 residues long: Transmembrane protein 126A (197 aa).

Over 1–35 (MENHEPDGTIIKENLTDIIARKINQLPEAERNLLE) the chain is Mitochondrial matrix. Residues 36 to 56 (NGSTYVGLNAALCGLIANSLF) form a helical membrane-spanning segment. Over 57-58 (RR) the chain is Mitochondrial intermembrane. A helical transmembrane segment spans residues 59–79 (ILHVTQARIAAGLPMAVIPFL). The Mitochondrial matrix segment spans residues 80 to 107 (TANVSYKGFVSLPLNTGDLQCETCTVTR). A helical transmembrane segment spans residues 108-128 (GGLVGLVFGGLYPVFLAIPVN). Residues 129-160 (GGLAARYNSALLPEKGNILNYWIRISKPVFRK) are Mitochondrial intermembrane-facing. Residues 161–177 (MLFPILLQTGFAAYLGS) form a helical membrane-spanning segment. The Mitochondrial matrix segment spans residues 178 to 197 (RQYKLLIKALQLPEPGLEIE).

This sequence belongs to the TMEM126 family. As to quaternary structure, interacts with OXA1L; promoting cotranslational quality control in mitochondria.

The protein localises to the mitochondrion inner membrane. In terms of biological role, protein required for the cotranslational protein quality control in the inner membrane of the mitochondria. Associates with newly synthesized polypeptides and may act as a chaperone that cooperates with OXA1L for the insertion of newly synthesized mitochondrial proteins into the inner membrane. Required for the assembly of the ND4 module of mitochondrial complex I. This chain is Transmembrane protein 126A (TMEM126A), found in Bos taurus (Bovine).